The sequence spans 382 residues: Bestrophin-6 (382 aa).

4 consecutive transmembrane segments (helical) span residues 29–49 (WKLI…VLAI), 68–88 (FINF…TTIV), 231–251 (LAYP…CAFA), and 265–285 (VIHY…MGWL).

The protein belongs to the anion channel-forming bestrophin (TC 1.A.46) family. Calcium-sensitive chloride channel subfamily.

The protein localises to the membrane. In Caenorhabditis elegans, this protein is Bestrophin-6 (best-6).